Reading from the N-terminus, the 264-residue chain is Acyl-[acyl-carrier-protein]--UDP-N-acetylglucosamine O-acyltransferase (264 aa).

It belongs to the transferase hexapeptide repeat family. LpxA subfamily. Homotrimer.

The protein resides in the cytoplasm. The catalysed reaction is a (3R)-hydroxyacyl-[ACP] + UDP-N-acetyl-alpha-D-glucosamine = a UDP-3-O-[(3R)-3-hydroxyacyl]-N-acetyl-alpha-D-glucosamine + holo-[ACP]. It functions in the pathway glycolipid biosynthesis; lipid IV(A) biosynthesis; lipid IV(A) from (3R)-3-hydroxytetradecanoyl-[acyl-carrier-protein] and UDP-N-acetyl-alpha-D-glucosamine: step 1/6. Involved in the biosynthesis of lipid A, a phosphorylated glycolipid that anchors the lipopolysaccharide to the outer membrane of the cell. The protein is Acyl-[acyl-carrier-protein]--UDP-N-acetylglucosamine O-acyltransferase of Rickettsia felis (strain ATCC VR-1525 / URRWXCal2) (Rickettsia azadi).